Consider the following 166-residue polypeptide: Small ribosomal subunit protein uS5 (166 aa).

Residues Leu-11–Val-74 enclose the S5 DRBM domain.

It belongs to the universal ribosomal protein uS5 family. In terms of assembly, part of the 30S ribosomal subunit. Contacts proteins S4 and S8.

Its function is as follows. With S4 and S12 plays an important role in translational accuracy. Functionally, located at the back of the 30S subunit body where it stabilizes the conformation of the head with respect to the body. The protein is Small ribosomal subunit protein uS5 of Pasteurella multocida (strain Pm70).